The following is an 84-amino-acid chain: Minor capsid protein P30 (84 aa).

In terms of assembly, dimer.

The protein resides in the virion. Minor capsid protein essential for stable capsid assembly of complete particles. The sequence is that of Minor capsid protein P30 (XXX) from Enterobacteria phage PRD1 (Bacteriophage PRD1).